The primary structure comprises 262 residues: Oxidoreductase GME11367 (262 aa).

It belongs to the avfA family.

The protein operates within secondary metabolite biosynthesis. Its function is as follows. Oxidoreductase; part of the gene cluster that mediates the biosynthesis of dibenzodioxocinones such as pestalotiollide B, a novel class of inhibitors against cholesterol ester transfer protein (CEPT). The biosynthesis initiates from condensation of acetate and malonate units catalyzed by the non-reducing PKS pks8/GME11356. Pks8/GME11356 lacks a thioesterase (TE) domain, which is important to the cyclizing of the third ring of atrochrysone carboxylic acid, and the esterase GME11355 might play the role of TE and catalyzes the cyclization reaction of the C ring. The lactamase-like protein GME11357 (or other beta-lactamases in Pestalotiopsis microspora) probably hydrolyzes the thioester bond between the ACP of pks8/GME11356 and the intermediate to release atrochrysone carboxylic acid, which is spontaneously dehydrates to form endocrocin anthrone. Endocrocin anthrone is further converted to emodin via the endocrocin intermediate. Emodin is then oxidized by several enzymes such as the Baeyer-Villiger oxidase GME11358, the oxidoreductase GME11367, the short chain dehydrogenase/reductase GME11373, as well as by other oxidoreductases from the cluster, to modify the A and C rings and open the B ring, and finally yield monodictyphenone. The prenyltransferase GME11375 may catalyze the addition reaction between the C5 side chains and the carbon bone of dibenzodioxocinones. The remaining biochemical reactions to the final product dibenzodioxocinones should be methylation catalyzed by methyltransferase GME11366 and reduction and lactonization reaction catalyzed by a series of oxidordeuctases. The protein is Oxidoreductase GME11367 of Pestalotiopsis microspora.